A 340-amino-acid polypeptide reads, in one-letter code: ATP-dependent 6-phosphofructokinase (340 aa).

Position 11 (G11) interacts with ATP. 21-25 is a binding site for ADP; that stretch reads RAVVR. ATP-binding positions include 72-73 and 102-105; these read RY and GDGS. D103 provides a ligand contact to Mg(2+). 125–127 contributes to the substrate binding site; it reads TID. Catalysis depends on D127, which acts as the Proton acceptor. ADP is bound at residue R154. Substrate-binding positions include R162 and 169–171; that span reads MGR. ADP is bound by residues 185-187, K211, and 213-215; these read GAD and KNH. Residues E222, R244, and 250–253 contribute to the substrate site; that span reads HIQR.

Belongs to the phosphofructokinase type A (PFKA) family. ATP-dependent PFK group I subfamily. Prokaryotic clade 'B1' sub-subfamily. In terms of assembly, homotetramer. Mg(2+) is required as a cofactor.

It localises to the cytoplasm. It catalyses the reaction beta-D-fructose 6-phosphate + ATP = beta-D-fructose 1,6-bisphosphate + ADP + H(+). Its pathway is carbohydrate degradation; glycolysis; D-glyceraldehyde 3-phosphate and glycerone phosphate from D-glucose: step 3/4. Its activity is regulated as follows. Allosterically activated by ADP and other diphosphonucleosides, and allosterically inhibited by phosphoenolpyruvate. In terms of biological role, catalyzes the phosphorylation of D-fructose 6-phosphate to fructose 1,6-bisphosphate by ATP, the first committing step of glycolysis. This Lactococcus lactis subsp. lactis (Streptococcus lactis) protein is ATP-dependent 6-phosphofructokinase.